The following is a 779-amino-acid chain: Cysteine-rich protein 2-binding protein (779 aa).

The interval M1–G34 is disordered. S4 carries the post-translational modification Phosphoserine. The residue at position 230 (K230) is an N6-acetyllysine. Disordered regions lie at residues S247–F292, L314–T345, and P360–Y457. A compositionally biased stretch (basic and acidic residues) spans M255 to K275. S284 carries the phosphoserine modification. N6-acetyllysine is present on K291. Over residues L314–S334 the composition is skewed to low complexity. Composition is skewed to basic and acidic residues over residues R402–G423 and K443–P452. The residue at position 413 (S413) is a Phosphoserine. The 145-residue stretch at L635 to R779 folds into the N-acetyltransferase domain.

As to quaternary structure, interacts with the LIM 1 domain of CSRP2. Component of the ADA2A-containing complex (ATAC), composed of CSRP2BP, KAT2A, TADA2L, TADA3L, ZZ3, MBIP, WDR5, YEATS2, CCDC101 and DR1. In the complex, it probably interacts directly with KAT2A, MBIP and WDR5.

It is found in the nucleus. The protein localises to the cytoplasm. Functionally, component of the ATAC complex, a complex with histone acetyltransferase activity on histones H3 and H4. May function as a scaffold for the ATAC complex to promote ATAC complex stability. Has also weak histone acetyltransferase activity toward histone H4. Required for the normal progression through G1 and G2/M phases of the cell cycle. The polypeptide is Cysteine-rich protein 2-binding protein (Mus musculus (Mouse)).